A 684-amino-acid polypeptide reads, in one-letter code: Nuclear transcription factor Y subunit gamma (684 aa).

4 disordered regions span residues 1–74 (MENQ…NIST), 112–238 (MNSP…SSFQ), 414–487 (HSPQ…TQQL), and 511–650 (QQQQ…KNDE). A compositionally biased stretch (low complexity) spans 21-49 (SNSHNNHHNNNNNNNYNNNNNNNINNINN). Over residues 58-74 (KSIQQHSPHSSTPNIST) the composition is skewed to polar residues. Over residues 142-162 (HQHPSSASSSSSSSSSSLSSS) the composition is skewed to low complexity. The span at 163-176 (SHHHHSNHHHHHPN) shows a compositional bias: basic residues. Polar residues predominate over residues 188 to 203 (PSLNDSSSNGNGTPAL). Residues 220 to 238 (TPTSTPNQRFQSNGSSSFQ) are compositionally biased toward low complexity. Positions 414-423 (HSPQLQEQSS) are enriched in polar residues. The segment covering 424–437 (NNNNNNNNNNNNNN) has biased composition (low complexity). Polar residues-rich tracts occupy residues 438-456 (SVSV…SPLS) and 464-477 (SQDY…NNHN). 3 stretches are compositionally biased toward low complexity: residues 478-487 (QSSLSQTQQL), 511-522 (QQQQHSQQISQQ), and 529-637 (PSNS…NNNN).

It belongs to the NFYC/HAP5 subunit family. In terms of assembly, heterotrimeric transcription factor composed of three components, NF-YA, NF-YB and NF-YC. NF-YB and NF-YC must interact and dimerize for NF-YA association and DNA binding.

The protein resides in the nucleus. Its function is as follows. Stimulates the transcription of various genes by recognizing and binding to a CCAAT motif in promoters. The sequence is that of Nuclear transcription factor Y subunit gamma (nfyc-1) from Dictyostelium discoideum (Social amoeba).